A 638-amino-acid chain; its full sequence is Threonine--tRNA ligase (638 aa).

The TGS domain occupies M1–T61. Positions D244–P536 are catalytic. Zn(2+) is bound by residues C336, H387, and H513.

The protein belongs to the class-II aminoacyl-tRNA synthetase family. As to quaternary structure, homodimer. Zn(2+) serves as cofactor.

The protein localises to the cytoplasm. It catalyses the reaction tRNA(Thr) + L-threonine + ATP = L-threonyl-tRNA(Thr) + AMP + diphosphate + H(+). Functionally, catalyzes the attachment of threonine to tRNA(Thr) in a two-step reaction: L-threonine is first activated by ATP to form Thr-AMP and then transferred to the acceptor end of tRNA(Thr). Also edits incorrectly charged L-seryl-tRNA(Thr). The polypeptide is Threonine--tRNA ligase (Paramagnetospirillum magneticum (strain ATCC 700264 / AMB-1) (Magnetospirillum magneticum)).